The sequence spans 191 residues: Cdc42 homolog (191 aa).

10–17 is a binding site for GTP; that stretch reads GDGAVGKT. The Effector region motif lies at 32 to 40; the sequence is YVPTVFDNY. GTP is bound by residues 57 to 61 and 115 to 118; these read DTAGQ and TQID. Cysteine methyl ester is present on cysteine 188. Cysteine 188 is lipidated: S-geranylgeranyl cysteine. Positions 189 to 191 are cleaved as a propeptide — removed in mature form; that stretch reads KFL.

Belongs to the small GTPase superfamily. Rho family. CDC42 subfamily.

The protein resides in the cell junction. It localises to the adherens junction. Its subcellular location is the cell membrane. Functionally, regulates mbt kinase activity and is also required to recruit mbt to adherens junctions. Together with mbt, regulates photoreceptor cell morphogenesis. The protein is Cdc42 homolog of Aedes aegypti (Yellowfever mosquito).